Consider the following 129-residue polypeptide: RxLR effector protein SFI6 (129 aa).

The signal sequence occupies residues 1–16 (MTLVVLATGLLASGTA). The RxLR-dEER motif lies at 42–64 (RFLRSHQITDDKVEINEHGEEER).

It belongs to the RxLR effector family.

It is found in the secreted. The protein resides in the host cytoplasm. The protein localises to the host cell membrane. Functionally, effector that suppresses flg22-induced post-translational MAP kinase activation in tomato but not in Arabidopsis. The perception of highly conserved pathogen- or microbe-associated molecular patterns (PAMPs/MAMPs), such as flg22, triggers converging signaling pathways recruiting MAP kinase cascades and inducing transcriptional re-programming, yielding a generic antimicrobial response. The sequence is that of RxLR effector protein SFI6 from Phytophthora infestans (strain T30-4) (Potato late blight agent).